Consider the following 1017-residue polypeptide: Peroxisomal ATPase PEX6 (1017 aa).

An ATP-binding site is contributed by 758 to 765; that stretch reads GPPGTGKT.

This sequence belongs to the AAA ATPase family. Interacts with PEX1; forming the PEX1-PEX6 AAA ATPase complex, which is composed of a heterohexamer formed by a trimer of PEX1-PEX6 dimers.

It localises to the cytoplasm. The protein resides in the cytosol. The protein localises to the peroxisome membrane. It catalyses the reaction ATP + H2O = ADP + phosphate + H(+). In terms of biological role, component of the PEX1-PEX6 AAA ATPase complex, a protein dislocase complex that mediates the ATP-dependent extraction of the PEX5 receptor from peroxisomal membranes, an essential step for PEX5 recycling. Specifically recognizes PEX5 monoubiquitinated at 'Cys-6', and pulls it out of the peroxisome lumen through the PEX2-PEX10-PEX12 retrotranslocation channel. Extraction by the PEX1-PEX6 AAA ATPase complex is accompanied by unfolding of the TPR repeats and release of bound cargo from PEX5. The polypeptide is Peroxisomal ATPase PEX6 (PEX6) (Candida glabrata (strain ATCC 2001 / BCRC 20586 / JCM 3761 / NBRC 0622 / NRRL Y-65 / CBS 138) (Yeast)).